The sequence spans 463 residues: MSPSSHKPLILACGLPLSGHIMPVLSLVHGLTDDGYEATVVTGRAFEQKVRDVGADFVPLEGNADFDDHTLDDLVPGRKDMAPSFDRTVQDVEHMMVATLPEQFAAIQRAFKKLSASGRPVVLVSEVLFFGAHPISLGAPGFKPAGWICLGVLPLLIRSDHTLGLDNDRSPEAHAKKLAMNHALEHQIFVKATAKHKEICRELGCTEDPKFIWEHSYIAADKFLQLCPPSLEFSRDHLPSNFKFAGSTPKHRTQFTPPSWWGDVLSAKRVIMVTQGTFAVSYKHLIVPTLEALKDEPDTLTVAILGRRGAKLPDDVVVPENARVIDYFNYDALLPHVDALVYNGGYGGLQHSLSHSVPVVIAGDSEDKPMVASRAEAAGVAIDLKTGLPTVEQIKEAVDSIIGNPKFHEASKKVQMELESHNSLKILEESIEEIASHDFGLLTKSDEETEDIPVKGPALAVSS.

The protein belongs to the UDP-glycosyltransferase family.

It catalyses the reaction 18-hydroxy-(9Z)-octadecenoate + UDP-alpha-D-glucose = (9Z)-18-hydroxyoctadec-9-enoate 18-O-beta-D-glucoside + UDP + H(+). The catalysed reaction is 17-hydroxy-(9Z)-octadecenoate + UDP-alpha-D-glucose = (9Z)-17-hydroxyoctadec-9-enoate 17-O-beta-D-glucoside + UDP + H(+). Catalyzes the first glycosylation step of sophorolipid biosynthesis, the coupling of glucose to a hydroxylated fatty acid to give rise to a glucolipid. Can glycosylate all hydroxyl fatty acids generated by cytochrome P450 monooxygenases CYP52M1, CYP52N1 and CYP52E3 into their corresponding glucolipids. Main products are 17-O- and 18-O-(beta-D-glucopyranosyl)-octadecenoic acids. The chain is UDP-glucosyltransferase A1 from Starmerella bombicola (Yeast).